Here is a 406-residue protein sequence, read N- to C-terminus: 5-methylthioadenosine/S-adenosylhomocysteine deaminase (406 aa).

Zn(2+)-binding residues include histidine 55 and histidine 57. The substrate site is built by glutamate 84, arginine 136, arginine 148, and histidine 173. Position 200 (histidine 200) interacts with Zn(2+). Substrate-binding residues include glutamate 203 and aspartate 279. Zn(2+) is bound at residue aspartate 279.

The protein belongs to the metallo-dependent hydrolases superfamily. MTA/SAH deaminase family. Zn(2+) is required as a cofactor.

The enzyme catalyses S-adenosyl-L-homocysteine + H2O + H(+) = S-inosyl-L-homocysteine + NH4(+). It carries out the reaction S-methyl-5'-thioadenosine + H2O + H(+) = S-methyl-5'-thioinosine + NH4(+). Its function is as follows. Catalyzes the deamination of 5-methylthioadenosine and S-adenosyl-L-homocysteine into 5-methylthioinosine and S-inosyl-L-homocysteine, respectively. Is also able to deaminate adenosine. Adenosine-5-monophosphate (AMP) and S-adenosyl-L-methionine (SAM) are not enzyme substrates. The protein is 5-methylthioadenosine/S-adenosylhomocysteine deaminase (mtaD) of Thermotoga maritima (strain ATCC 43589 / DSM 3109 / JCM 10099 / NBRC 100826 / MSB8).